We begin with the raw amino-acid sequence, 282 residues long: Pantothenate synthetase (282 aa).

Met-30–His-37 provides a ligand contact to ATP. Residue His-37 is the Proton donor of the active site. Gln-61 lines the (R)-pantoate pocket. Gln-61 provides a ligand contact to beta-alanine. Residue Gly-147–Asp-150 coordinates ATP. Gln-153 is a (R)-pantoate binding site. ATP contacts are provided by residues Val-176 and Met-184–Arg-187.

This sequence belongs to the pantothenate synthetase family. Homodimer.

The protein resides in the cytoplasm. The catalysed reaction is (R)-pantoate + beta-alanine + ATP = (R)-pantothenate + AMP + diphosphate + H(+). It participates in cofactor biosynthesis; (R)-pantothenate biosynthesis; (R)-pantothenate from (R)-pantoate and beta-alanine: step 1/1. Its function is as follows. Catalyzes the condensation of pantoate with beta-alanine in an ATP-dependent reaction via a pantoyl-adenylate intermediate. This is Pantothenate synthetase from Caldicellulosiruptor bescii (strain ATCC BAA-1888 / DSM 6725 / KCTC 15123 / Z-1320) (Anaerocellum thermophilum).